The chain runs to 110 residues: UPF0122 protein lin1916 (110 aa).

The protein belongs to the UPF0122 family.

Functionally, might take part in the signal recognition particle (SRP) pathway. This is inferred from the conservation of its genetic proximity to ftsY/ffh. May be a regulatory protein. The chain is UPF0122 protein lin1916 from Listeria innocua serovar 6a (strain ATCC BAA-680 / CLIP 11262).